Consider the following 282-residue polypeptide: Bifunctional protein FolD (282 aa).

NADP(+)-binding positions include 164-166 (GAS), I189, and I230.

It belongs to the tetrahydrofolate dehydrogenase/cyclohydrolase family. Homodimer.

The catalysed reaction is (6R)-5,10-methylene-5,6,7,8-tetrahydrofolate + NADP(+) = (6R)-5,10-methenyltetrahydrofolate + NADPH. The enzyme catalyses (6R)-5,10-methenyltetrahydrofolate + H2O = (6R)-10-formyltetrahydrofolate + H(+). It functions in the pathway one-carbon metabolism; tetrahydrofolate interconversion. Its function is as follows. Catalyzes the oxidation of 5,10-methylenetetrahydrofolate to 5,10-methenyltetrahydrofolate and then the hydrolysis of 5,10-methenyltetrahydrofolate to 10-formyltetrahydrofolate. In Campylobacter jejuni subsp. doylei (strain ATCC BAA-1458 / RM4099 / 269.97), this protein is Bifunctional protein FolD.